The following is a 305-amino-acid chain: Acetaldehyde dehydrogenase (305 aa).

13–16 (SGNI) lines the NAD(+) pocket. Cys-128 serves as the catalytic Acyl-thioester intermediate. NAD(+)-binding positions include 159–167 (SAGPGTRQN) and Asn-278.

It belongs to the acetaldehyde dehydrogenase family.

The catalysed reaction is acetaldehyde + NAD(+) + CoA = acetyl-CoA + NADH + H(+). This Roseiflexus castenholzii (strain DSM 13941 / HLO8) protein is Acetaldehyde dehydrogenase.